The following is a 258-amino-acid chain: Global transcriptional regulator CodY (258 aa).

The GAF domain stretch occupies residues 1-156 (MSTLLSKTRR…SATIVGMELL (156 aa)). Positions 204–223 (ASKIADKVGITRSVIVNALR) form a DNA-binding region, H-T-H motif.

Belongs to the CodY family.

Its subcellular location is the cytoplasm. Its function is as follows. DNA-binding global transcriptional regulator which is involved in the adaptive response to starvation and acts by directly or indirectly controlling the expression of numerous genes in response to nutrient availability. During rapid exponential growth, CodY is highly active and represses genes whose products allow adaptation to nutrient depletion. In Clostridium perfringens (strain SM101 / Type A), this protein is Global transcriptional regulator CodY.